A 177-amino-acid polypeptide reads, in one-letter code: Coatomer subunit zeta-1 (177 aa).

Belongs to the adaptor complexes small subunit family. As to quaternary structure, oligomeric complex that consists of at least the alpha, beta, beta', gamma, delta, epsilon and zeta subunits.

It localises to the cytoplasm. The protein localises to the golgi apparatus membrane. The protein resides in the cytoplasmic vesicle. It is found in the COPI-coated vesicle membrane. In terms of biological role, the coatomer is a cytosolic protein complex that binds to dilysine motifs and reversibly associates with Golgi non-clathrin-coated vesicles, which further mediate biosynthetic protein transport from the ER, via the Golgi up to the trans Golgi network. Coatomer complex is required for budding from Golgi membranes, and is essential for the retrograde Golgi-to-ER transport of dilysine-tagged proteins. The zeta subunit may be involved in regulating the coat assembly and, hence, the rate of biosynthetic protein transport due to its association-dissociation properties with the coatomer complex. The sequence is that of Coatomer subunit zeta-1 (COPZ1) from Oryza sativa subsp. japonica (Rice).